Reading from the N-terminus, the 200-residue chain is Protein GrpE (200 aa).

Residues 1–11 (MSNQTNKAQDN) show a composition bias toward polar residues. The disordered stretch occupies residues 1 to 25 (MSNQTNKAQDNQVEEIVEGELLNEN).

Belongs to the GrpE family. As to quaternary structure, homodimer.

The protein resides in the cytoplasm. Functionally, participates actively in the response to hyperosmotic and heat shock by preventing the aggregation of stress-denatured proteins, in association with DnaK and GrpE. It is the nucleotide exchange factor for DnaK and may function as a thermosensor. Unfolded proteins bind initially to DnaJ; upon interaction with the DnaJ-bound protein, DnaK hydrolyzes its bound ATP, resulting in the formation of a stable complex. GrpE releases ADP from DnaK; ATP binding to DnaK triggers the release of the substrate protein, thus completing the reaction cycle. Several rounds of ATP-dependent interactions between DnaJ, DnaK and GrpE are required for fully efficient folding. This Shewanella pealeana (strain ATCC 700345 / ANG-SQ1) protein is Protein GrpE.